Reading from the N-terminus, the 485-residue chain is Adenylate kinase 8 (485 aa).

Adenylate kinase stretches follow at residues 58–258 (PRVF…TFVL) and 269–471 (PRIL…SYIV). 67–72 (ASGKHT) contacts ATP. Positions 87 to 113 (TPENVLSSDVSLLVKEAQSYRDKGQEV) are NMP 1. Residues 140–143 (GFPK) and Gln147 contribute to the AMP site. The interval 177 to 206 (GKRIDITDGEVYHTTFDWPSDPAVQRNLVE) is LID 1. Arg218 lines the AMP pocket. 278-283 (GSGRSL) contributes to the ATP binding site. Residues 298–327 (CCGQVLKEAVADQTKLGELIQPYIENDQQV) form an NMP 2 region. AMP contacts are provided by residues 325–327 (QQV), 354–357 (GFPQ), and Gln361. The tract at residues 391–424 (LCMTDPVSGERYHSIYKPAPRSEVQERLQQNPKY) is LID 2. Position 432 (Arg432) interacts with AMP.

It belongs to the adenylate kinase family.

The protein localises to the cytoplasm. It is found in the cytosol. It carries out the reaction AMP + ATP = 2 ADP. It catalyses the reaction a 2'-deoxyribonucleoside 5'-diphosphate + ATP = a 2'-deoxyribonucleoside 5'-triphosphate + ADP. The catalysed reaction is a ribonucleoside 5'-diphosphate + ATP = a ribonucleoside 5'-triphosphate + ADP. Nucleoside monophosphate (NMP) kinase that catalyzes the reversible transfer of the terminal phosphate group between nucleoside triphosphates and monophosphates. Has highest activity toward AMP, and weaker activity toward dAMP, CMP and dCMP. Also displays broad nucleoside diphosphate kinase activity. In Xenopus laevis (African clawed frog), this protein is Adenylate kinase 8 (ak8).